The sequence spans 296 residues: NAD kinase (296 aa).

Catalysis depends on D74, which acts as the Proton acceptor. NAD(+)-binding positions include 74-75 (DG), 148-149 (ND), R176, D178, and 189-194 (TAYALS).

The protein belongs to the NAD kinase family. Requires a divalent metal cation as cofactor.

The protein resides in the cytoplasm. The enzyme catalyses NAD(+) + ATP = ADP + NADP(+) + H(+). Involved in the regulation of the intracellular balance of NAD and NADP, and is a key enzyme in the biosynthesis of NADP. Catalyzes specifically the phosphorylation on 2'-hydroxyl of the adenosine moiety of NAD to yield NADP. This is NAD kinase from Nitrosomonas europaea (strain ATCC 19718 / CIP 103999 / KCTC 2705 / NBRC 14298).